Consider the following 250-residue polypeptide: Methylthioribulose-1-phosphate dehydratase (250 aa).

Residue Cys103 coordinates substrate. Zn(2+)-binding residues include His121 and His123. Glu146 serves as the catalytic Proton donor/acceptor. His211 contributes to the Zn(2+) binding site.

The protein belongs to the aldolase class II family. MtnB subfamily. The cofactor is Zn(2+).

It localises to the cytoplasm. It carries out the reaction 5-(methylsulfanyl)-D-ribulose 1-phosphate = 5-methylsulfanyl-2,3-dioxopentyl phosphate + H2O. It participates in amino-acid biosynthesis; L-methionine biosynthesis via salvage pathway; L-methionine from S-methyl-5-thio-alpha-D-ribose 1-phosphate: step 2/6. Functionally, catalyzes the dehydration of methylthioribulose-1-phosphate (MTRu-1-P) into 2,3-diketo-5-methylthiopentyl-1-phosphate (DK-MTP-1-P). This chain is Methylthioribulose-1-phosphate dehydratase, found in Clavispora lusitaniae (strain ATCC 42720) (Yeast).